The chain runs to 291 residues: 3-hydroxy-5-phosphonooxypentane-2,4-dione thiolase (291 aa).

Catalysis depends on K203, which acts as the Schiff-base intermediate with substrate.

It belongs to the DeoC/FbaB aldolase family. As to quaternary structure, homodecamer.

It is found in the cytoplasm. It carries out the reaction dihydroxyacetone phosphate + acetyl-CoA = 3-hydroxy-2,4-dioxopentyl phosphate + CoA. Functionally, involved in the degradation of phospho-AI-2, thereby terminating induction of the lsr operon and closing the AI-2 signaling cycle. Catalyzes the transfer of an acetyl moiety from 3-hydroxy-5-phosphonooxypentane-2,4-dione to CoA to form glycerone phosphate and acetyl-CoA. The chain is 3-hydroxy-5-phosphonooxypentane-2,4-dione thiolase from Salmonella typhimurium (strain LT2 / SGSC1412 / ATCC 700720).